Reading from the N-terminus, the 341-residue chain is Glycerol-3-phosphate dehydrogenase [NAD(P)+] (341 aa).

Residues S15, W16, R36, and K110 each contribute to the NADPH site. Residues K110, G139, and S141 each contribute to the sn-glycerol 3-phosphate site. A143 contributes to the NADPH binding site. 5 residues coordinate sn-glycerol 3-phosphate: K194, D247, S257, R258, and N259. Residue K194 is the Proton acceptor of the active site. Position 258 (R258) interacts with NADPH. Positions 282 and 284 each coordinate NADPH.

Belongs to the NAD-dependent glycerol-3-phosphate dehydrogenase family.

The protein localises to the cytoplasm. It catalyses the reaction sn-glycerol 3-phosphate + NAD(+) = dihydroxyacetone phosphate + NADH + H(+). It carries out the reaction sn-glycerol 3-phosphate + NADP(+) = dihydroxyacetone phosphate + NADPH + H(+). It participates in membrane lipid metabolism; glycerophospholipid metabolism. Catalyzes the reduction of the glycolytic intermediate dihydroxyacetone phosphate (DHAP) to sn-glycerol 3-phosphate (G3P), the key precursor for phospholipid synthesis. This is Glycerol-3-phosphate dehydrogenase [NAD(P)+] from Xanthomonas euvesicatoria pv. vesicatoria (strain 85-10) (Xanthomonas campestris pv. vesicatoria).